The primary structure comprises 412 residues: uncharacterized protein (412 aa).

A run of 7 repeats spans residues 112–116 (GSIRS), 117–121 (GSIRS), 122–126 (GSIRD), 127–131 (GSIRD), 132–136 (GSIRS), 137–141 (GNIRD), and 142–146 (GSVRS). A 7 X 5 AA tandem repeats of G-[NS]-[IV]-R-[DS] region spans residues 112 to 146 (GSIRSGSIRSGSIRDGSIRDGSIRSGNIRDGSVRS). The segment covering 116 to 126 (SGSIRSGSIRD) has biased composition (low complexity). Residues 116–209 (SGSIRSGSIR…SEKSIKPSTK (94 aa)) are disordered. The segment covering 192 to 209 (NHYAESEYSEKSIKPSTK) has biased composition (basic and acidic residues).

It belongs to the asfivirus B407L family.

This is an uncharacterized protein from Ornithodoros (relapsing fever ticks).